Here is a 364-residue protein sequence, read N- to C-terminus: DNA polymerase IV (364 aa).

A UmuC domain is found at 14–198; the sequence is IIHIDMDAFF…LPIEKFHGVG (185 aa). Asp-18 and Asp-116 together coordinate Mg(2+). The active site involves Glu-117.

It belongs to the DNA polymerase type-Y family. As to quaternary structure, monomer. Requires Mg(2+) as cofactor.

The protein resides in the cytoplasm. The enzyme catalyses DNA(n) + a 2'-deoxyribonucleoside 5'-triphosphate = DNA(n+1) + diphosphate. Poorly processive, error-prone DNA polymerase involved in untargeted mutagenesis. Copies undamaged DNA at stalled replication forks, which arise in vivo from mismatched or misaligned primer ends. These misaligned primers can be extended by PolIV. Exhibits no 3'-5' exonuclease (proofreading) activity. May be involved in translesional synthesis, in conjunction with the beta clamp from PolIII. The polypeptide is DNA polymerase IV (Streptococcus pyogenes serotype M12 (strain MGAS2096)).